A 99-amino-acid polypeptide reads, in one-letter code: UPF0235 protein AHA_3661 (99 aa).

This sequence belongs to the UPF0235 family.

This chain is UPF0235 protein AHA_3661, found in Aeromonas hydrophila subsp. hydrophila (strain ATCC 7966 / DSM 30187 / BCRC 13018 / CCUG 14551 / JCM 1027 / KCTC 2358 / NCIMB 9240 / NCTC 8049).